The primary structure comprises 123 residues: Large ribosomal subunit protein uL24 (123 aa).

Belongs to the universal ribosomal protein uL24 family. In terms of assembly, part of the 50S ribosomal subunit.

Functionally, one of two assembly initiator proteins, it binds directly to the 5'-end of the 23S rRNA, where it nucleates assembly of the 50S subunit. Located at the polypeptide exit tunnel on the outside of the subunit. This Pyrobaculum islandicum (strain DSM 4184 / JCM 9189 / GEO3) protein is Large ribosomal subunit protein uL24.